The primary structure comprises 575 residues: Inactive terpenoid synthase 20, chloroplastic (575 aa).

Residues 1–52 (MEAITKNGSLSQTLVHCGPKSLSSFIPVRCLRFSKNPFPKKLVVTRARTSIN) constitute a chloroplast transit peptide. The Mg(2+) site is built by aspartate 332, aspartate 336, aspartate 474, threonine 478, and glutamate 482. Positions 332–336 (DDLYD) match the DDXXD motif motif.

Belongs to the terpene synthase family. Tpsa subfamily. In terms of tissue distribution, predominantly expressed in roots but also in leaves and stems.

The protein resides in the plastid. It localises to the chloroplast. Its function is as follows. Does not possess diterpene synthase activity. This Arabidopsis thaliana (Mouse-ear cress) protein is Inactive terpenoid synthase 20, chloroplastic.